A 161-amino-acid chain; its full sequence is Phosphopantetheine adenylyltransferase (161 aa).

S9 is a substrate binding site. ATP-binding positions include 9-10 (SF) and H17. The substrate site is built by K41, L73, and K87. Residues 88–90 (GLR), E98, and 122–128 (YSFVSSS) contribute to the ATP site.

This sequence belongs to the bacterial CoaD family. As to quaternary structure, homohexamer. Requires Mg(2+) as cofactor.

It localises to the cytoplasm. The catalysed reaction is (R)-4'-phosphopantetheine + ATP + H(+) = 3'-dephospho-CoA + diphosphate. The protein operates within cofactor biosynthesis; coenzyme A biosynthesis; CoA from (R)-pantothenate: step 4/5. Functionally, reversibly transfers an adenylyl group from ATP to 4'-phosphopantetheine, yielding dephospho-CoA (dPCoA) and pyrophosphate. The sequence is that of Phosphopantetheine adenylyltransferase from Mycobacteroides abscessus (strain ATCC 19977 / DSM 44196 / CCUG 20993 / CIP 104536 / JCM 13569 / NCTC 13031 / TMC 1543 / L948) (Mycobacterium abscessus).